A 1154-amino-acid polypeptide reads, in one-letter code: Kinesin-like protein KIN-7E, chloroplastic (1154 aa).

Composition is skewed to low complexity over residues 1-14 (MSSS…SISP) and 29-109 (VAAA…PPVA). A chloroplast-targeting transit peptide spans 1–21 (MSSSSRPGRASISPFRSRRTS). Positions 1-109 (MSSSSRPGRA…RAAGRAPPVA (109 aa)) are disordered. Positions 119–437 (NIMVTVRFRP…LKFAHRSKHI (319 aa)) constitute a Kinesin motor domain. 199-206 (GVTSSGKT) contributes to the ATP binding site. Residues 441 to 523 (ASQNKIIDEK…AALMGRIQRL (83 aa)) are a coiled coil. Residues 620–674 (LSTSVDSESTASGSPSFSRSSQQKHPLLDLKDGRRKSMTRKGDDPALTDSFPGRT) are disordered. The segment covering 628–640 (STASGSPSFSRSS) has biased composition (low complexity). Coiled coils occupy residues 734–761 (DSQI…LEQR) and 801–845 (ADNR…DNVA). Positions 838 to 885 (AKNEDNVASMQSSEPSSTSSNPRDLANEVASHSKMPSRTTEDHTESPL) are disordered. The segment covering 846-857 (SMQSSEPSSTSS) has biased composition (low complexity). Residues 894–967 (AEIENLKLDK…DLAAAKDQTR (74 aa)) are a coiled coil.

Belongs to the TRAFAC class myosin-kinesin ATPase superfamily. Kinesin family. KIN-7 subfamily.

It localises to the plastid. The protein resides in the chloroplast. This is Kinesin-like protein KIN-7E, chloroplastic from Oryza sativa subsp. japonica (Rice).